Reading from the N-terminus, the 200-residue chain is Integrin beta-1-binding protein 1 (200 aa).

The span at Met1–Ser10 shows a compositional bias: basic residues. Residues Met1 to Asn56 are disordered. A Nuclear localization signal motif is present at residues Lys6–Lys7. Residues Ser11 to Ser29 are compositionally biased toward low complexity. Residues Ser34 to Asn56 show a composition bias toward polar residues. Position 38 is a phosphothreonine; by CaMK2 (Thr38). Position 41 is a phosphoserine (Ser41). The PID domain maps to Asp58 to Pro200. The segment at Tyr136–Ile139 is interaction with KRIT1. Positions Ile139–Met141 are interaction with ITGB1.

As to quaternary structure, interacts (via N-terminus and PTB domain) with ROCK1. Found in a complex, at least composed of ITGB1BP1, KRIT1 and RAP1A. Interacts (via C-terminal region) with ITGB1 (via C-terminal cytoplasmic tail); the interaction prevents talin TLN1 binding to ITGB1 and KRIT1 and ITGB1 compete for the same binding site. Interacts with KRIT1 (via N-terminal NPXY motif); the interaction induces the opening conformation of KRIT1 and KRIT1 and ITGB1 compete for the same binding site. Isoform 2 does not interact with ITGB1. Interacts with CDC42 (GTP- or GDP-bound form); the interaction is increased with the CDC42-membrane bound forms and prevents both CDC42 activation and cell spreading. Interacts (via C-terminal domain region) with NME2. Interacts with FERMT2 and RAC1. Post-translationally, phosphorylation at Thr-38 seems to enhance integrin alpha5beta1-mediated cell adhesion. The degree of phosphorylation is regulated by integrin-dependent cell-matrix interaction.

It localises to the nucleus. The protein resides in the cytoplasm. Its subcellular location is the cytoskeleton. It is found in the cell membrane. The protein localises to the cell projection. It localises to the lamellipodium. The protein resides in the ruffle. Key regulator of the integrin-mediated cell-matrix interaction signaling by binding to the ITGB1 cytoplasmic tail and preventing the activation of integrin alpha-5/beta-1 (heterodimer of ITGA5 and ITGB1) by talin or FERMT1. Plays a role in cell proliferation, differentiation, spreading, adhesion and migration in the context of mineralization and bone development and angiogenesis. Stimulates cellular proliferation in a fibronectin-dependent manner. Involved in the regulation of beta-1 integrin-containing focal adhesion (FA) site dynamics by controlling its assembly rate during cell adhesion; inhibits beta-1 integrin clustering within FA by directly competing with talin TLN1, and hence stimulates osteoblast spreading and migration in a fibronectin- and/or collagen-dependent manner. Acts as a guanine nucleotide dissociation inhibitor (GDI) by regulating Rho family GTPases during integrin-mediated cell matrix adhesion; reduces the level of active GTP-bound form of both CDC42 and RAC1 GTPases upon cell adhesion to fibronectin. Stimulates the release of active CDC42 from the membranes to maintain it in an inactive cytoplasmic pool. Participates in the translocation of the Rho-associated protein kinase ROCK1 to membrane ruffles at cell leading edges of the cell membrane, leading to an increase of myoblast cell migration on laminin. Plays a role in bone mineralization at a late stage of osteoblast differentiation; modulates the dynamic formation of focal adhesions into fibrillar adhesions, which are adhesive structures responsible for fibronectin deposition and fibrillogenesis. Plays a role in blood vessel development; acts as a negative regulator of angiogenesis by attenuating endothelial cell proliferation and migration, lumen formation and sprouting angiogenesis by promoting AKT phosphorylation and inhibiting ERK1/2 phosphorylation through activation of the Notch signaling pathway. Promotes transcriptional activity of the MYC promoter. The chain is Integrin beta-1-binding protein 1 (ITGB1BP1) from Bos taurus (Bovine).